The chain runs to 268 residues: Phosphonates import ATP-binding protein PhnC (268 aa).

One can recognise an ABC transporter domain in the interval 11–254 (LHAEAVTKRF…EVMAIYQRAE (244 aa)). 43-50 (GLSGSGKS) lines the ATP pocket.

This sequence belongs to the ABC transporter superfamily. Phosphonates importer (TC 3.A.1.9.1) family. The complex is composed of two ATP-binding proteins (PhnC), two transmembrane proteins (PhnE) and a solute-binding protein (PhnD).

It localises to the cell membrane. It carries out the reaction phosphonate(out) + ATP + H2O = phosphonate(in) + ADP + phosphate + H(+). Its function is as follows. Part of the ABC transporter complex PhnCDE involved in phosphonates import. Responsible for energy coupling to the transport system. This chain is Phosphonates import ATP-binding protein PhnC, found in Nocardia farcinica (strain IFM 10152).